The primary structure comprises 428 residues: Histidinol dehydrogenase (428 aa).

Residues Tyr129, Gln188, and Asn211 each coordinate NAD(+). Residues Ser234, Gln256, and His259 each contribute to the substrate site. 2 residues coordinate Zn(2+): Gln256 and His259. Catalysis depends on proton acceptor residues Glu323 and His324. The substrate site is built by His324, Asp357, Glu411, and His416. Residue Asp357 participates in Zn(2+) binding. A Zn(2+)-binding site is contributed by His416.

The protein belongs to the histidinol dehydrogenase family. The cofactor is Zn(2+).

It catalyses the reaction L-histidinol + 2 NAD(+) + H2O = L-histidine + 2 NADH + 3 H(+). It participates in amino-acid biosynthesis; L-histidine biosynthesis; L-histidine from 5-phospho-alpha-D-ribose 1-diphosphate: step 9/9. In terms of biological role, catalyzes the sequential NAD-dependent oxidations of L-histidinol to L-histidinaldehyde and then to L-histidine. The chain is Histidinol dehydrogenase from Caulobacter vibrioides (strain ATCC 19089 / CIP 103742 / CB 15) (Caulobacter crescentus).